We begin with the raw amino-acid sequence, 115 residues long: U3-lycotoxin-Ls1a (115 aa).

The first 20 residues, 1–20 (MKFVLLFGVFLVTLFSYSSA), serve as a signal peptide directing secretion. Positions 21-44 (EMLDDFGQADEDELLSLIEKEEAR) are excised as a propeptide. 4 disulfide bridges follow: C48–C63, C55–C72, C62–C87, and C74–C85.

This sequence belongs to the neurotoxin 19 (CSTX) family. 01 subfamily. Expressed by the venom gland.

It is found in the secreted. This Lycosa singoriensis (Wolf spider) protein is U3-lycotoxin-Ls1a.